We begin with the raw amino-acid sequence, 646 residues long: Peptidylprolyl isomerase domain and WD repeat-containing protein 1 (646 aa).

Positions 1 to 50 (MATESGSDSQLRRRRRRDPEGSEKTELSEREPALAVAGSEENDDENEERW) are disordered. A2 is subject to N-acetylalanine. The span at 17-32 (RDPEGSEKTELSEREP) shows a compositional bias: basic and acidic residues. WD repeat units follow at residues 88–126 (MHRD…IEFV), 131–170 (SHLG…MINM), 221–260 (LHVS…YKFP), and 278–319 (KCKA…RVFD). A PPIase cyclophilin-type domain is found at 490 to 645 (VSDSAIVHTS…EDVSIINITV (156 aa)).

The protein belongs to the cyclophilin-type PPIase family. PPIL1 subfamily. As to quaternary structure, identified in the spliceosome C complex.

It localises to the nucleus. It carries out the reaction [protein]-peptidylproline (omega=180) = [protein]-peptidylproline (omega=0). Inhibited by cyclosporin A (CsA). In terms of biological role, PPIase that catalyzes the cis-trans isomerization of proline imidic peptide bonds in oligopeptides and may therefore assist protein folding. May be involved in pre-mRNA splicing. The protein is Peptidylprolyl isomerase domain and WD repeat-containing protein 1 of Mus musculus (Mouse).